Reading from the N-terminus, the 162-residue chain is Ribosomal RNA large subunit methyltransferase H (162 aa).

Gly108 is a binding site for S-adenosyl-L-methionine.

Belongs to the RNA methyltransferase RlmH family. As to quaternary structure, homodimer.

It localises to the cytoplasm. It catalyses the reaction pseudouridine(1915) in 23S rRNA + S-adenosyl-L-methionine = N(3)-methylpseudouridine(1915) in 23S rRNA + S-adenosyl-L-homocysteine + H(+). In terms of biological role, specifically methylates the pseudouridine at position 1915 (m3Psi1915) in 23S rRNA. This is Ribosomal RNA large subunit methyltransferase H from Methylobacterium sp. (strain 4-46).